The following is a 298-amino-acid chain: Acetaldehyde dehydrogenase (298 aa).

Position 6–9 (serine 6–isoleucine 9) interacts with NAD(+). The active-site Acyl-thioester intermediate is the cysteine 121. Residues serine 152–asparagine 160 and asparagine 271 contribute to the NAD(+) site.

The protein belongs to the acetaldehyde dehydrogenase family.

The catalysed reaction is acetaldehyde + NAD(+) + CoA = acetyl-CoA + NADH + H(+). This chain is Acetaldehyde dehydrogenase, found in Mycobacterium avium (strain 104).